Here is a 413-residue protein sequence, read N- to C-terminus: Exodeoxyribonuclease I (413 aa).

Residues 12 to 193 (LFYDYETFGI…VSDVYATIEI (182 aa)) form the Exonuclease domain. Mg(2+) contacts are provided by D15, E17, and D186. E17 lines the substrate pocket. One can recognise an ExoI SH3-like domain in the interval 202–349 (PRLFDFFFKI…QNIKIIFSKN (148 aa)). The region spanning 350–413 (NNTNQFFNVD…RYRARNFFIH (64 aa)) is the ExoI C-terminal domain.

As to quaternary structure, monomer. Interacts with ssb (via C-terminus); this interaction stimulates the exonuclease activity by recruiting the enzyme to its substrate. Mg(2+) is required as a cofactor.

It catalyses the reaction Exonucleolytic cleavage in the 3'- to 5'-direction to yield nucleoside 5'-phosphates.. Functionally, degrades single-stranded DNA (ssDNA) in a highly processive manner. Also functions as a DNA deoxyribophosphodiesterase that releases deoxyribose-phosphate moieties following the cleavage of DNA at an apurinic/apyrimidinic (AP) site by either an AP endonuclease or AP lyase. The protein is Exodeoxyribonuclease I (sbcB) of Buchnera aphidicola subsp. Acyrthosiphon pisum (strain APS) (Acyrthosiphon pisum symbiotic bacterium).